The following is a 238-amino-acid chain: Small ribosomal subunit protein uS2 (238 aa).

It belongs to the universal ribosomal protein uS2 family.

The protein is Small ribosomal subunit protein uS2 of Actinobacillus pleuropneumoniae serotype 7 (strain AP76).